We begin with the raw amino-acid sequence, 266 residues long: Transcription factor BIP1 (266 aa).

Positions 1–73 (MAMYMPSTAS…DREAQRAIRA (73 aa)) are disordered. Composition is skewed to polar residues over residues 7–22 (STASSTTHIRSPSGTP) and 47–56 (RSVSTLTPSQ). The bZIP domain occupies 54–95 (PSQLARKRANDREAQRAIRARTKEHIERLEREVEELKSKQNR). A basic motif region spans residues 59 to 81 (RKRANDREAQRAIRARTKEHIER). Residues 61 to 73 (RANDREAQRAIRA) are compositionally biased toward basic and acidic residues. A leucine-zipper region spans residues 82–89 (LEREVEEL).

The protein belongs to the bZIP family. As to expression, expressed in appressoria.

Its subcellular location is the nucleus. Functionally, transcription factor that is required for infection of plants hosts. Is not implicated in the development of appressoria or the subsequent penetration of host leaves, but is necessary for the initial establishment of the fungus within plant cells by orchestrating the expression of a unique set of early invasion-related genes within appressoria, encoding secreted effectors, enzymes, secondary metabolism-related enzymes, and signaling membrane receptors. Controls the expression of targeted genes by interacting directly with a 5'-TGACTC-3' motif present in their promoters. The polypeptide is Transcription factor BIP1 (Pyricularia oryzae (strain 70-15 / ATCC MYA-4617 / FGSC 8958) (Rice blast fungus)).